Consider the following 262-residue polypeptide: Leucine-rich repeat-containing protein 18 (262 aa).

7 LRR repeats span residues 28 to 49, 51 to 72, 74 to 95, 97 to 118, 122 to 144, 145 to 167, and 168 to 189; these read GRKR…ILRL, DIDE…IAKF, NLRW…IGQM, SLLF…VELN, NIRT…GALK, ELHE…AKLP, and KLKK…EMFV.

In terms of tissue distribution, exclusively expressed in spermatocytes and roud spermatids within seminiferous tubules during spermatogenesis.

The protein localises to the cytoplasm. May be involved in the regulation of spermatogenesis and sperm maturation. The polypeptide is Leucine-rich repeat-containing protein 18 (Lrrc18) (Mus musculus (Mouse)).